The following is a 416-amino-acid chain: UDP-N-acetylglucosamine 1-carboxyvinyltransferase (416 aa).

Residue 22–23 participates in phosphoenolpyruvate binding; sequence KN. Arg91 provides a ligand contact to UDP-N-acetyl-alpha-D-glucosamine. The active-site Proton donor is Cys115. Cys115 bears the 2-(S-cysteinyl)pyruvic acid O-phosphothioketal mark. Residues 120–124, Asp305, and Ile327 contribute to the UDP-N-acetyl-alpha-D-glucosamine site; that span reads RPIDL.

This sequence belongs to the EPSP synthase family. MurA subfamily.

The protein localises to the cytoplasm. The catalysed reaction is phosphoenolpyruvate + UDP-N-acetyl-alpha-D-glucosamine = UDP-N-acetyl-3-O-(1-carboxyvinyl)-alpha-D-glucosamine + phosphate. Its pathway is cell wall biogenesis; peptidoglycan biosynthesis. In terms of biological role, cell wall formation. Adds enolpyruvyl to UDP-N-acetylglucosamine. In Buchnera aphidicola subsp. Acyrthosiphon pisum (strain 5A), this protein is UDP-N-acetylglucosamine 1-carboxyvinyltransferase.